We begin with the raw amino-acid sequence, 376 residues long: MLRSVVLAGGGTAGHVEPALAVADALRATDSRVRLTLLGTATGLEARLVPARGHELATVPKVPMPRRPTPAVFKLPARFLDAICQAGETLDLVRADVVVGFGGYVSAPAYLAARRRGIPIVVHEANPLPGLANRLGARLTPFVATSYPSTPLRGATLTGIPLRGEILTLDRSPAAMRAARARYGLDPHRPTLLVFGGSQGARSLNQVMTAAAHPLAAAGIQVLHATGPKNFDEVAAALPLDLPTPYELRPYLDHIPSAYAAADMTLCRSGAMTCAELAAAGLPAVYVPLPHGNGEQRRNALPTVEAGGGLLVDDAELSASWLLENALPVLISAERLAKMSAACAGSGHPQAAAAIVAMIRDAAATRRRSRPRHAAP.

UDP-N-acetyl-alpha-D-glucosamine contacts are provided by residues 12 to 14 (TAG), asparagine 126, arginine 163, serine 198, and glutamine 296.

It belongs to the glycosyltransferase 28 family. MurG subfamily.

The protein localises to the cell membrane. It carries out the reaction di-trans,octa-cis-undecaprenyl diphospho-N-acetyl-alpha-D-muramoyl-L-alanyl-D-glutamyl-meso-2,6-diaminopimeloyl-D-alanyl-D-alanine + UDP-N-acetyl-alpha-D-glucosamine = di-trans,octa-cis-undecaprenyl diphospho-[N-acetyl-alpha-D-glucosaminyl-(1-&gt;4)]-N-acetyl-alpha-D-muramoyl-L-alanyl-D-glutamyl-meso-2,6-diaminopimeloyl-D-alanyl-D-alanine + UDP + H(+). It participates in cell wall biogenesis; peptidoglycan biosynthesis. Functionally, cell wall formation. Catalyzes the transfer of a GlcNAc subunit on undecaprenyl-pyrophosphoryl-MurNAc-pentapeptide (lipid intermediate I) to form undecaprenyl-pyrophosphoryl-MurNAc-(pentapeptide)GlcNAc (lipid intermediate II). The protein is UDP-N-acetylglucosamine--N-acetylmuramyl-(pentapeptide) pyrophosphoryl-undecaprenol N-acetylglucosamine transferase of Frankia casuarinae (strain DSM 45818 / CECT 9043 / HFP020203 / CcI3).